We begin with the raw amino-acid sequence, 1316 residues long: DNA-directed RNA polymerase subunit beta' (1316 aa).

Positions 60, 62, 75, and 78 each coordinate Zn(2+). The tract at residues 183–209 is disordered; sequence ELEEEGAKSDVRRKVRDGGEREMRQLR. Aspartate 535, aspartate 537, and aspartate 539 together coordinate Mg(2+). Residues cysteine 890, cysteine 966, cysteine 973, and cysteine 976 each contribute to the Zn(2+) site.

Belongs to the RNA polymerase beta' chain family. As to quaternary structure, the RNAP catalytic core consists of 2 alpha, 1 beta, 1 beta' and 1 omega subunit. When a sigma factor is associated with the core the holoenzyme is formed, which can initiate transcription. Mg(2+) is required as a cofactor. It depends on Zn(2+) as a cofactor.

It carries out the reaction RNA(n) + a ribonucleoside 5'-triphosphate = RNA(n+1) + diphosphate. In terms of biological role, DNA-dependent RNA polymerase catalyzes the transcription of DNA into RNA using the four ribonucleoside triphosphates as substrates. The protein is DNA-directed RNA polymerase subunit beta' of Mycolicibacterium gilvum (strain PYR-GCK) (Mycobacterium gilvum (strain PYR-GCK)).